A 38-amino-acid chain; its full sequence is Toxin Lqh 8/6 (38 aa).

4 disulfide bridges follow: C2/C19, C5/C28, C16/C33, and C20/C35.

Expressed by the venom gland.

It localises to the secreted. Its function is as follows. Toxin with unknown function in healthy organisms. On glioma cells, interacts with chloride channels (probably ClC-3/CLCN3) and MMP2 at the surface of glioma cells. This complex is then internalized via caveolae, thus inhibiting the chloride channels necessary for cell shrinkage and tumor propagation. This is Toxin Lqh 8/6 from Leiurus hebraeus (Hebrew deathstalker scorpion).